Consider the following 234-residue polypeptide: UPF0173 metal-dependent hydrolase R01310 (234 aa).

The protein belongs to the UPF0173 family.

The sequence is that of UPF0173 metal-dependent hydrolase R01310 from Rhizobium meliloti (strain 1021) (Ensifer meliloti).